The sequence spans 396 residues: SSTETPPSYNQLNYNENLLRFFNSKPVTAPVELDPPKVESSYVSSARGEDARSTLSPVQGFEGSGGSGSSGNFTTGSNLHMSSVTNTSNAGTGTSGTGNSGDGGGGGGANGTGSGAAPPVTLTESLLNKHNDEMEKFMLKKHRESRGRSGEKNKKSANEAMKMLEYSGPGPGHGHGIKRGGSHSWEGEANKPKQQLTLNTSGGGGGVGVGGGMPLFLDITHASSSSQNKGLAGVGVGGAGGVVGGGGSGTGLGGNGNVGSGNGNNNQPSTNQYTQSRLPCTQNINLWPPFSVGITTPTSVLSSHTAVPPSSFSPQHSLFPTFYYIPASIAASSPSSTNTNPNRPHKHAHVHNSSEKPSTSQAAAATMPLQYMTGVMYPHPSLFYTHPAAAAATAMV.

4 disordered regions span residues 27-120, 164-188, 253-273, and 333-362; these read VTAP…APPV, LEYS…WEGE, GGNG…TNQY, and SPSS…TSQA. Residues 93 to 114 are compositionally biased toward gly residues; it reads GTSGTGNSGDGGGGGGANGTGS. The span at 253–262 shows a compositional bias: gly residues; sequence GGNGNVGSGN. Positions 333 to 342 are enriched in low complexity; that stretch reads SPSSTNTNPN.

As to quaternary structure, forms a heterodimer with timeless (TIM); the complex then translocates into the nucleus. Phosphorylated with a circadian rhythmicity, probably by the double-time protein (dbt). Phosphorylation could be implicated in the stability of per monomer and in the formation of heterodimer per-tim.

The protein localises to the nucleus. It localises to the cytoplasm. It is found in the perinuclear region. Functionally, essential for biological clock functions. Determines the period length of circadian and ultradian rhythms; an increase in PER dosage leads to shortened circadian rhythms and a decrease leads to lengthened circadian rhythms. Essential for the circadian rhythmicity of locomotor activity, eclosion behavior, and for the rhythmic component of the male courtship song that originates in the thoracic nervous system. The biological cycle depends on the rhythmic formation and nuclear localization of the TIM-PER complex. Light induces the degradation of TIM, which promotes elimination of PER. Nuclear activity of the heterodimer coordinatively regulates PER and TIM transcription through a negative feedback loop. Behaves as a negative element in circadian transcriptional loop. Does not appear to bind DNA, suggesting indirect transcriptional inhibition. This Drosophila pavlovskiana (Fruit fly) protein is Period circadian protein (per).